Reading from the N-terminus, the 122-residue chain is Urease subunit beta (122 aa).

The segment at 102 to 122 (DGGTAVAGEPRPGIAAERDHQ) is disordered.

This sequence belongs to the urease beta subunit family. As to quaternary structure, heterotrimer of UreA (gamma), UreB (beta) and UreC (alpha) subunits. Three heterotrimers associate to form the active enzyme.

It is found in the cytoplasm. It carries out the reaction urea + 2 H2O + H(+) = hydrogencarbonate + 2 NH4(+). Its pathway is nitrogen metabolism; urea degradation; CO(2) and NH(3) from urea (urease route): step 1/1. The protein is Urease subunit beta of Paenarthrobacter aurescens (strain TC1).